Consider the following 452-residue polypeptide: Probable 1,4-beta-D-glucan cellobiohydrolase A (452 aa).

The N-terminal stretch at 1 to 17 (MHQRALLFSALAVAANA) is a signal peptide. An N-linked (GlcNAc...) asparagine glycan is attached at N81. Catalysis depends on E226, which acts as the Nucleophile. The Proton donor role is filled by E231. An N-linked (GlcNAc...) asparagine glycan is attached at N284. The interval 406–432 (DPSKPGVARGTCEHGAGDPEKVESQHP) is disordered. Residues 416-431 (TCEHGAGDPEKVESQH) are compositionally biased toward basic and acidic residues.

This sequence belongs to the glycosyl hydrolase 7 (cellulase C) family.

The protein resides in the secreted. The catalysed reaction is Hydrolysis of (1-&gt;4)-beta-D-glucosidic linkages in cellulose and cellotetraose, releasing cellobiose from the non-reducing ends of the chains.. The biological conversion of cellulose to glucose generally requires three types of hydrolytic enzymes: (1) Endoglucanases which cut internal beta-1,4-glucosidic bonds; (2) Exocellobiohydrolases that cut the disaccharide cellobiose from the non-reducing end of the cellulose polymer chain; (3) Beta-1,4-glucosidases which hydrolyze the cellobiose and other short cello-oligosaccharides to glucose. The chain is Probable 1,4-beta-D-glucan cellobiohydrolase A (cbhA) from Neosartorya fischeri (strain ATCC 1020 / DSM 3700 / CBS 544.65 / FGSC A1164 / JCM 1740 / NRRL 181 / WB 181) (Aspergillus fischerianus).